Here is a 148-residue protein sequence, read N- to C-terminus: Deoxyuridine 5'-triphosphate nucleotidohydrolase (148 aa).

Substrate is bound by residues 68 to 70 (RSG), Asn81, 85 to 87 (TID), and Lys95.

This sequence belongs to the dUTPase family. Mg(2+) is required as a cofactor.

It carries out the reaction dUTP + H2O = dUMP + diphosphate + H(+). Its pathway is pyrimidine metabolism; dUMP biosynthesis; dUMP from dCTP (dUTP route): step 2/2. Functionally, this enzyme is involved in nucleotide metabolism: it produces dUMP, the immediate precursor of thymidine nucleotides and it decreases the intracellular concentration of dUTP so that uracil cannot be incorporated into DNA. In Rickettsia felis (strain ATCC VR-1525 / URRWXCal2) (Rickettsia azadi), this protein is Deoxyuridine 5'-triphosphate nucleotidohydrolase.